Reading from the N-terminus, the 2548-residue chain is Variant-silencing SET domain-containing protein (2548 aa).

Residues 37 to 48 are compositionally biased toward acidic residues; the sequence is IDDDDDDDNDNN. Disordered regions lie at residues 37-61, 336-379, and 585-629; these read IDDD…KTNN, GDPK…DDDN, and SVDR…NTQT. The segment covering 336-357 has biased composition (basic and acidic residues); that stretch reads GDPKKRIERNKQEIEDHRREQD. Acidic residues predominate over residues 358–378; it reads GENDQEEDNYDDYDDEDDDDD. Residues 602-616 are compositionally biased toward low complexity; sequence NGSNNNNSSSNNNNN. Positions 617-629 are enriched in polar residues; sequence ITHITNDCDNTQT. A PHD-type 1 zinc finger spans residues 787 to 846; that stretch reads FYLCEFCEQNIFDMNNMIKKDKAKECMYRCNISCGRTFHKACVCYIKNNDNYICFFCLYD. The segment covering 929-944 has biased composition (basic residues); sequence IKRRHIYRKRRRRGPR. 4 disordered regions span residues 929-1054, 1546-1575, 1713-1732, and 1772-1822; these read IKRR…CDEN, EKNT…NTLD, EQGS…NNAK, and INNA…DDHR. Residues 986–1016 show a composition bias toward acidic residues; it reads DNNDDNNDNNDDNNDNNDDNNDNNDNNDDNN. Low complexity-rich tracts occupy residues 1017–1050 and 1551–1572; these read NDNN…NNNN and NKLC…TKYN. Positions 1714–1732 are enriched in polar residues; sequence QGSINNAKHNEQGSINNAK. The 51-residue stretch at 2067 to 2117 folds into the AWS domain; the sequence is SDDYKCLCQGECNLYTCYNSLSNIQCSKSRCNLPEKIQDRKCFNRPFRKSF. Residues 2119–2240 form the SET domain; it reads KDLEIKKTEK…SGEEITYNYS (122 aa). Position 2239 (Tyr2239) interacts with S-adenosyl-L-methionine. A PHD-type 2 zinc finger spans residues 2423 to 2471; it reads DEVCRKCKSCGNLTMCDKCFQSYHQLCGNMHSKMYKNNELVLCRFCQKY.

It belongs to the class V-like SAM-binding methyltransferase superfamily.

It localises to the nucleus. The protein resides in the chromosome. The enzyme catalyses L-lysyl(36)-[histone H3] + 3 S-adenosyl-L-methionine = N(6),N(6),N(6)-trimethyl-L-lysyl(36)-[histone H3] + 3 S-adenosyl-L-homocysteine + 3 H(+). In terms of biological role, histone methyltransferase that specifically represses expression of the surface antigen-coding var genes by mediating trimethylation of 'Lys-36' of histone H3 (H3K36me3) on var genes. SETVS-dependent H3K36me3 is specifically involved in var genes silencing, a central step malaria pathogenesis: each parasite contains 60 distinct var genes that each code for a different PfEMP1 protein. During infection, the clonal parasite population expresses only 1 gene at a time, while the 59 other var genes are silenced. The parasite then switches to the expression of a new variant antigen as an immune-evasion mechanism to avoid the host antibody response. Represses expression of both var mRNA and antisense long non-coding RNA. In Plasmodium falciparum (isolate 3D7), this protein is Variant-silencing SET domain-containing protein (SETVS).